Here is a 115-residue protein sequence, read N- to C-terminus: Large ribosomal subunit protein uL24 (115 aa).

The interval 49–68 (NMKTKHHPPSKDQEKGSITK) is disordered.

It belongs to the universal ribosomal protein uL24 family. Part of the 50S ribosomal subunit.

In terms of biological role, one of two assembly initiator proteins, it binds directly to the 5'-end of the 23S rRNA, where it nucleates assembly of the 50S subunit. One of the proteins that surrounds the polypeptide exit tunnel on the outside of the subunit. This is Large ribosomal subunit protein uL24 from Phytoplasma australiense.